Here is a 560-residue protein sequence, read N- to C-terminus: Formate--tetrahydrofolate ligase (560 aa).

Residue 69 to 76 coordinates ATP; that stretch reads TPAGEGKS.

This sequence belongs to the formate--tetrahydrofolate ligase family.

It carries out the reaction (6S)-5,6,7,8-tetrahydrofolate + formate + ATP = (6R)-10-formyltetrahydrofolate + ADP + phosphate. It participates in one-carbon metabolism; tetrahydrofolate interconversion. This chain is Formate--tetrahydrofolate ligase, found in Listeria monocytogenes serotype 4b (strain CLIP80459).